A 189-amino-acid chain; its full sequence is Probable DNA-directed RNA polymerase subunit delta (189 aa).

The region spanning Leu-14–Trp-81 is the HTH HARE-type domain. Composition is skewed to acidic residues over residues Glu-90–Glu-100 and Glu-118–Glu-189. The tract at residues Glu-90–Glu-189 is disordered.

Belongs to the RpoE family. RNAP is composed of a core of 2 alpha, a beta and a beta' subunits. The core is associated with a delta subunit and one of several sigma factors.

Its function is as follows. Participates in both the initiation and recycling phases of transcription. In the presence of the delta subunit, RNAP displays an increased specificity of transcription, a decreased affinity for nucleic acids, and an increased efficiency of RNA synthesis because of enhanced recycling. The protein is Probable DNA-directed RNA polymerase subunit delta of Lactobacillus delbrueckii subsp. bulgaricus (strain ATCC 11842 / DSM 20081 / BCRC 10696 / JCM 1002 / NBRC 13953 / NCIMB 11778 / NCTC 12712 / WDCM 00102 / Lb 14).